The sequence spans 883 residues: Translation initiation factor IF-2 (883 aa).

The disordered stretch occupies residues 1–259; that stretch reads MVDTKTPGDK…GASKQRGRLT (259 aa). 2 stretches are compositionally biased toward low complexity: residues 10–22 and 77–89; these read KTLT…LTLK and PRQQ…PQQS. The segment covering 113 to 184 has biased composition (basic and acidic residues); sequence ARVREIEERK…GDAEPAKKPA (72 aa). Residues 185-218 are compositionally biased toward low complexity; it reads ETSTTTTTAAPARPATTTTRTPTPAGRPPAVAAE. Residues 235–244 show a composition bias toward pro residues; sequence PARPAPPPKQ. In terms of domain architecture, tr-type G spans 379-548; the sequence is PRSPVVTVMG…MIALQAEILE (170 aa). The tract at residues 388–395 is G1; sequence GHVDHGKT. Residue 388–395 coordinates GTP; that stretch reads GHVDHGKT. Positions 413 to 417 are G2; the sequence is GITQH. The tract at residues 436–439 is G3; the sequence is DTPG. Residues 436–440 and 490–493 contribute to the GTP site; these read DTPGH and NKID. The tract at residues 490–493 is G4; the sequence is NKID. The tract at residues 526–528 is G5; that stretch reads SAK.

This sequence belongs to the TRAFAC class translation factor GTPase superfamily. Classic translation factor GTPase family. IF-2 subfamily.

The protein localises to the cytoplasm. Functionally, one of the essential components for the initiation of protein synthesis. Protects formylmethionyl-tRNA from spontaneous hydrolysis and promotes its binding to the 30S ribosomal subunits. Also involved in the hydrolysis of GTP during the formation of the 70S ribosomal complex. The protein is Translation initiation factor IF-2 of Rhodopseudomonas palustris (strain ATCC BAA-98 / CGA009).